Reading from the N-terminus, the 523-residue chain is 2-isopropylmalate synthase (523 aa).

In terms of domain architecture, Pyruvate carboxyltransferase spans 5–267 (VIIFDTTLRD…HTAINHQEIW (263 aa)). 4 residues coordinate Mn(2+): D14, H202, H204, and N238. The tract at residues 392-523 (RLDYFSVQSG…QHNENNKETV (132 aa)) is regulatory domain.

It belongs to the alpha-IPM synthase/homocitrate synthase family. LeuA type 1 subfamily. In terms of assembly, homodimer. Requires Mn(2+) as cofactor.

The protein resides in the cytoplasm. The enzyme catalyses 3-methyl-2-oxobutanoate + acetyl-CoA + H2O = (2S)-2-isopropylmalate + CoA + H(+). It functions in the pathway amino-acid biosynthesis; L-leucine biosynthesis; L-leucine from 3-methyl-2-oxobutanoate: step 1/4. Functionally, catalyzes the condensation of the acetyl group of acetyl-CoA with 3-methyl-2-oxobutanoate (2-ketoisovalerate) to form 3-carboxy-3-hydroxy-4-methylpentanoate (2-isopropylmalate). The sequence is that of 2-isopropylmalate synthase from Escherichia coli O127:H6 (strain E2348/69 / EPEC).